Consider the following 197-residue polypeptide: MLDREGYRPNVGIVLLNSRNEVFWGKRVGQHSWQFPQGGIQHGESPEQAMYRELHEEVGLLPEHVQIIGRTRDWLRYDVPEEYLRRQNSTRVHRAAYRGQKQIWFLLRLVGLDSDIQLRAFEHPEFDAWRWVPFWIQLDAVIGFKREVYQLALSELARYLSRGMRMQQLAWGTPLDLFQSFYAGNEDQSKSSEKSDK.

A Nudix hydrolase domain is found at 6 to 154 (GYRPNVGIVL…KREVYQLALS (149 aa)). The short motif at 38 to 59 (GGIQHGESPEQAMYRELHEEVG) is the Nudix box element.

Belongs to the Nudix hydrolase family. RppH subfamily. A divalent metal cation serves as cofactor.

Accelerates the degradation of transcripts by removing pyrophosphate from the 5'-end of triphosphorylated RNA, leading to a more labile monophosphorylated state that can stimulate subsequent ribonuclease cleavage. This is RNA pyrophosphohydrolase from Polynucleobacter necessarius subsp. necessarius (strain STIR1).